Consider the following 227-residue polypeptide: Phosphoribosylformylglycinamidine synthase subunit PurQ (227 aa).

Positions 3–225 (FAVIVFPGSN…LRNWRESHVV (223 aa)) constitute a Glutamine amidotransferase type-1 domain. Cys86 (nucleophile) is an active-site residue. Residues His194 and Glu196 contribute to the active site.

In terms of assembly, part of the FGAM synthase complex composed of 1 PurL, 1 PurQ and 2 PurS subunits.

The protein localises to the cytoplasm. It catalyses the reaction N(2)-formyl-N(1)-(5-phospho-beta-D-ribosyl)glycinamide + L-glutamine + ATP + H2O = 2-formamido-N(1)-(5-O-phospho-beta-D-ribosyl)acetamidine + L-glutamate + ADP + phosphate + H(+). The catalysed reaction is L-glutamine + H2O = L-glutamate + NH4(+). It functions in the pathway purine metabolism; IMP biosynthesis via de novo pathway; 5-amino-1-(5-phospho-D-ribosyl)imidazole from N(2)-formyl-N(1)-(5-phospho-D-ribosyl)glycinamide: step 1/2. Part of the phosphoribosylformylglycinamidine synthase complex involved in the purines biosynthetic pathway. Catalyzes the ATP-dependent conversion of formylglycinamide ribonucleotide (FGAR) and glutamine to yield formylglycinamidine ribonucleotide (FGAM) and glutamate. The FGAM synthase complex is composed of three subunits. PurQ produces an ammonia molecule by converting glutamine to glutamate. PurL transfers the ammonia molecule to FGAR to form FGAM in an ATP-dependent manner. PurS interacts with PurQ and PurL and is thought to assist in the transfer of the ammonia molecule from PurQ to PurL. This is Phosphoribosylformylglycinamidine synthase subunit PurQ from Halalkalibacterium halodurans (strain ATCC BAA-125 / DSM 18197 / FERM 7344 / JCM 9153 / C-125) (Bacillus halodurans).